Consider the following 217-residue polypeptide: Uracil phosphoribosyltransferase (217 aa).

5-phospho-alpha-D-ribose 1-diphosphate contacts are provided by residues Arg84, Arg109, and 137-145 (DPMLATGGS). Uracil is bound by residues Ile202 and 207 to 209 (GDA). Asp208 contacts 5-phospho-alpha-D-ribose 1-diphosphate.

This sequence belongs to the UPRTase family. It depends on Mg(2+) as a cofactor.

It catalyses the reaction UMP + diphosphate = 5-phospho-alpha-D-ribose 1-diphosphate + uracil. The protein operates within pyrimidine metabolism; UMP biosynthesis via salvage pathway; UMP from uracil: step 1/1. With respect to regulation, allosterically activated by GTP. Catalyzes the conversion of uracil and 5-phospho-alpha-D-ribose 1-diphosphate (PRPP) to UMP and diphosphate. The polypeptide is Uracil phosphoribosyltransferase (Synechococcus elongatus (strain ATCC 33912 / PCC 7942 / FACHB-805) (Anacystis nidulans R2)).